The following is a 539-amino-acid chain: CTP synthase (539 aa).

Residues 1–269 (MSATKYIFVT…DERVLSKLKL (269 aa)) form an amidoligase domain region. Position 15 (serine 15) interacts with CTP. Serine 15 contacts UTP. 16–21 (SLGKGI) serves as a coordination point for ATP. Residue tyrosine 56 coordinates L-glutamine. Residue aspartate 73 participates in ATP binding. Positions 73 and 143 each coordinate Mg(2+). Residues 150–152 (DIE), 190–195 (KTKPTQ), and lysine 226 each bind CTP. Residues 190–195 (KTKPTQ) and lysine 226 contribute to the UTP site. Positions 295–537 (NIALVGKYVE…VKAANDFAKG (243 aa)) constitute a Glutamine amidotransferase type-1 domain. Glycine 357 is an L-glutamine binding site. Cysteine 384 serves as the catalytic Nucleophile; for glutamine hydrolysis. L-glutamine-binding positions include 385–388 (LGMQ), glutamate 408, and arginine 465. Catalysis depends on residues histidine 510 and glutamate 512.

It belongs to the CTP synthase family. Homotetramer.

It catalyses the reaction UTP + L-glutamine + ATP + H2O = CTP + L-glutamate + ADP + phosphate + 2 H(+). The catalysed reaction is L-glutamine + H2O = L-glutamate + NH4(+). The enzyme catalyses UTP + NH4(+) + ATP = CTP + ADP + phosphate + 2 H(+). It participates in pyrimidine metabolism; CTP biosynthesis via de novo pathway; CTP from UDP: step 2/2. With respect to regulation, allosterically activated by GTP, when glutamine is the substrate; GTP has no effect on the reaction when ammonia is the substrate. The allosteric effector GTP functions by stabilizing the protein conformation that binds the tetrahedral intermediate(s) formed during glutamine hydrolysis. Inhibited by the product CTP, via allosteric rather than competitive inhibition. In terms of biological role, catalyzes the ATP-dependent amination of UTP to CTP with either L-glutamine or ammonia as the source of nitrogen. Regulates intracellular CTP levels through interactions with the four ribonucleotide triphosphates. The polypeptide is CTP synthase (Cytophaga hutchinsonii (strain ATCC 33406 / DSM 1761 / CIP 103989 / NBRC 15051 / NCIMB 9469 / D465)).